The primary structure comprises 66 residues: Large ribosomal subunit protein bL33c (66 aa).

It belongs to the bacterial ribosomal protein bL33 family.

The protein localises to the plastid. It is found in the chloroplast. This chain is Large ribosomal subunit protein bL33c, found in Aethionema cordifolium (Lebanon stonecress).